Here is a 283-residue protein sequence, read N- to C-terminus: Glutamate racemase (283 aa).

Residues 28–29 (DS) and 60–61 (YG) each bind substrate. Catalysis depends on C92, which acts as the Proton donor/acceptor. Substrate is bound at residue 93–94 (NT). Residue C204 is the Proton donor/acceptor of the active site. Position 205 to 206 (205 to 206 (TH)) interacts with substrate.

This sequence belongs to the aspartate/glutamate racemases family.

The enzyme catalyses L-glutamate = D-glutamate. It functions in the pathway cell wall biogenesis; peptidoglycan biosynthesis. Provides the (R)-glutamate required for cell wall biosynthesis. This Salmonella enteritidis PT4 (strain P125109) protein is Glutamate racemase.